A 426-amino-acid polypeptide reads, in one-letter code: Serine--tRNA ligase (426 aa).

An L-serine-binding site is contributed by 231–233; sequence TAE. ATP is bound at residue 262–264; that stretch reads RSE. Glu-285 is an L-serine binding site. 349 to 352 is an ATP binding site; that stretch reads EISS. An L-serine-binding site is contributed by Ser-385.

The protein belongs to the class-II aminoacyl-tRNA synthetase family. Type-1 seryl-tRNA synthetase subfamily. As to quaternary structure, homodimer. The tRNA molecule binds across the dimer.

It is found in the cytoplasm. It catalyses the reaction tRNA(Ser) + L-serine + ATP = L-seryl-tRNA(Ser) + AMP + diphosphate + H(+). It carries out the reaction tRNA(Sec) + L-serine + ATP = L-seryl-tRNA(Sec) + AMP + diphosphate + H(+). Its pathway is aminoacyl-tRNA biosynthesis; selenocysteinyl-tRNA(Sec) biosynthesis; L-seryl-tRNA(Sec) from L-serine and tRNA(Sec): step 1/1. Its function is as follows. Catalyzes the attachment of serine to tRNA(Ser). Is also able to aminoacylate tRNA(Sec) with serine, to form the misacylated tRNA L-seryl-tRNA(Sec), which will be further converted into selenocysteinyl-tRNA(Sec). This is Serine--tRNA ligase from Brevibacillus brevis (strain 47 / JCM 6285 / NBRC 100599).